A 383-amino-acid chain; its full sequence is F-box/kelch-repeat protein At2g29830 (383 aa).

The disordered stretch occupies residues Met1–Gln21. A compositionally biased stretch (acidic residues) spans Pro11 to Gln21. Residues Leu27–Arg73 form the F-box domain. Kelch repeat units lie at residues Lys130–Gly178, Arg179–Tyr224, Val226–Asp272, Leu274–Thr317, and Lys324–Pro370.

The sequence is that of F-box/kelch-repeat protein At2g29830 from Arabidopsis thaliana (Mouse-ear cress).